A 210-amino-acid chain; its full sequence is Probable GTP-binding protein EngB (210 aa).

One can recognise an EngB-type G domain in the interval 30-204; that stretch reads QGYEVAFAGR…YRVLADWMEL (175 aa). GTP contacts are provided by residues 38–45, 64–68, 82–85, 149–152, and 182–185; these read GRSNAGKS, GRTQL, DLPG, TKAD, and LFSA. 2 residues coordinate Mg(2+): Ser45 and Thr66.

This sequence belongs to the TRAFAC class TrmE-Era-EngA-EngB-Septin-like GTPase superfamily. EngB GTPase family. It depends on Mg(2+) as a cofactor.

Its function is as follows. Necessary for normal cell division and for the maintenance of normal septation. In Pseudomonas entomophila (strain L48), this protein is Probable GTP-binding protein EngB.